Reading from the N-terminus, the 428-residue chain is Type II methyltransferase M.TthHB8I (428 aa).

The segment at 407–428 (RKGNTERRKHGPYTSPESAGSF) is disordered.

It belongs to the N(4)/N(6)-methyltransferase family.

It catalyses the reaction a 2'-deoxyadenosine in DNA + S-adenosyl-L-methionine = an N(6)-methyl-2'-deoxyadenosine in DNA + S-adenosyl-L-homocysteine + H(+). A gamma subtype methylase, recognizes the double-stranded sequence 5'-TCGA-3', methylates A-4 on both strands and protects the DNA from cleavage by the TthHB8I endonuclease. This is Type II methyltransferase M.TthHB8I from Thermus thermophilus (strain ATCC 27634 / DSM 579 / HB8).